The primary structure comprises 122 residues: Large ribosomal subunit protein bL12 (122 aa).

The protein belongs to the bacterial ribosomal protein bL12 family. In terms of assembly, homodimer. Part of the ribosomal stalk of the 50S ribosomal subunit. Forms a multimeric L10(L12)X complex, where L10 forms an elongated spine to which 2 to 4 L12 dimers bind in a sequential fashion. Binds GTP-bound translation factors.

Functionally, forms part of the ribosomal stalk which helps the ribosome interact with GTP-bound translation factors. Is thus essential for accurate translation. The sequence is that of Large ribosomal subunit protein bL12 from Streptococcus sanguinis (strain SK36).